Here is a 422-residue protein sequence, read N- to C-terminus: Phosphoserine aminotransferase 2, chloroplastic (422 aa).

The transit peptide at 1 to 50 directs the protein to the chloroplast; it reads MAASTNSFLIGNQTQIPSLKPKSISQSFIHFTKPNTINLTTRTKSVSIRC. Ala51 is modified (N-acetylalanine). Arg101 provides a ligand contact to L-glutamate. Residues 135–136, Trp161, Thr211, Asp233, and Gln256 contribute to the pyridoxal 5'-phosphate site; that span reads AT. An N6-(pyridoxal phosphate)lysine modification is found at Lys257. 298-299 provides a ligand contact to pyridoxal 5'-phosphate; it reads NT.

Belongs to the class-V pyridoxal-phosphate-dependent aminotransferase family. SerC subfamily. Requires pyridoxal 5'-phosphate as cofactor.

The protein localises to the plastid. It is found in the chloroplast. It carries out the reaction O-phospho-L-serine + 2-oxoglutarate = 3-phosphooxypyruvate + L-glutamate. The catalysed reaction is 4-(phosphooxy)-L-threonine + 2-oxoglutarate = (R)-3-hydroxy-2-oxo-4-phosphooxybutanoate + L-glutamate. The protein operates within amino-acid biosynthesis; L-serine biosynthesis; L-serine from 3-phospho-D-glycerate: step 2/3. In terms of biological role, involved in the plastidial phosphorylated pathway of serine biosynthesis (PPSB). Catalyzes the reversible conversion of 3-phosphohydroxypyruvate to phosphoserine. In Arabidopsis thaliana (Mouse-ear cress), this protein is Phosphoserine aminotransferase 2, chloroplastic (PSAT2).